An 88-amino-acid chain; its full sequence is Phage-like element PBSX protein XkdR (88 aa).

This sequence to B.subtilis YqbR.

The sequence is that of Phage-like element PBSX protein XkdR (xkdR) from Bacillus subtilis (strain 168).